The primary structure comprises 209 residues: Small ribosomal subunit protein uS4 (209 aa).

The 64-residue stretch at 98–161 folds into the S4 RNA-binding domain; that stretch reads ARLDNVVYRM…RDLEVIKKAV (64 aa).

This sequence belongs to the universal ribosomal protein uS4 family. As to quaternary structure, part of the 30S ribosomal subunit. Contacts protein S5. The interaction surface between S4 and S5 is involved in control of translational fidelity.

In terms of biological role, one of the primary rRNA binding proteins, it binds directly to 16S rRNA where it nucleates assembly of the body of the 30S subunit. Functionally, with S5 and S12 plays an important role in translational accuracy. The polypeptide is Small ribosomal subunit protein uS4 (Thermotoga petrophila (strain ATCC BAA-488 / DSM 13995 / JCM 10881 / RKU-1)).